A 406-amino-acid polypeptide reads, in one-letter code: Calreticulin (406 aa).

Positions 1–17 are cleaved as a signal peptide; it reads MMWCKTVIVLLATVGFI. Cys-105 and Cys-137 are disulfide-bonded. The an alpha-D-glucoside site is built by Tyr-109, Lys-111, Tyr-128, and Asp-135. Tandem repeats lie at residues 191–202, 210–221, 227–238, 244–255, 259–269, 273–283, and 287–297. Residues 191–255 are 4 X approximate repeats; that stretch reads VESGNLEDDW…DATKPEDWDD (65 aa). Residues 207-251 are compositionally biased toward basic and acidic residues; the sequence is KIKDPTATKPEDWDDRATIPDPDDKKPEDWDKPEHIPDPDATKPE. The segment at 207–259 is disordered; it reads KIKDPTATKPEDWDDRATIPDPDDKKPEDWDKPEHIPDPDATKPEDWDDEMDG. Residues 259-297 form a 3 X approximate repeats region; it reads GEWEPPMIDNPEFKGEWQPKQLDNPNYKGAWEHPEIANP. Asp-317 lines the an alpha-D-glucoside pocket. Residues 347 to 406 form a disordered region; it reads KNTQAGEKKMKEAQDEVQRKKDEEEAKKASDKDDEDEDDDDEEKDDESKQDKDQSEHDEL. Over residues 352-377 the composition is skewed to basic and acidic residues; the sequence is GEKKMKEAQDEVQRKKDEEEAKKASD. Residues 378–391 show a composition bias toward acidic residues; that stretch reads KDDEDEDDDDEEKD. The segment covering 392–406 has biased composition (basic and acidic residues); sequence DESKQDKDQSEHDEL.

Belongs to the calreticulin family.

It localises to the endoplasmic reticulum lumen. Molecular calcium-binding chaperone promoting folding, oligomeric assembly and quality control in the ER via the calreticulin/calnexin cycle. This lectin may interact transiently with almost all of the monoglucosylated glycoproteins that are synthesized in the ER. The protein is Calreticulin of Drosophila melanogaster (Fruit fly).